Reading from the N-terminus, the 350-residue chain is dTDP-D-glucose 4,6-dehydratase (350 aa).

Residue Thr142 participates in substrate binding. Asp143 acts as the Proton donor in catalysis. Active-site proton acceptor residues include Glu144 and Tyr166.

It belongs to the NAD(P)-dependent epimerase/dehydratase family. dTDP-glucose dehydratase subfamily. Requires NAD(+) as cofactor.

The enzyme catalyses dTDP-alpha-D-glucose = dTDP-4-dehydro-6-deoxy-alpha-D-glucose + H2O. The polypeptide is dTDP-D-glucose 4,6-dehydratase (TGDS) (Homo sapiens (Human)).